The following is a 992-amino-acid chain: UPF0182 protein MT3285 (992 aa).

7 helical membrane-spanning segments follow: residues 17 to 39, 59 to 81, 113 to 135, 169 to 191, 212 to 229, 255 to 277, and 284 to 306; these read RILIMIALGVIVLLLAGPRLIDA, LATRIVVCLVAGVVVGGIVFGGL, LVGIGIPAAIGLLAGIVAQSYWA, LMLSYMLVSVFLAFVANLVAHYI, LVSLVGVLVLLKAVAYWL, VLPAKLILMAIALICAAAVFSAI, and IPAIGLVLLLLSSLIVGAGWPLI. The tract at residues 906–938 is disordered; it reads PTEAAVPPSPAANPPPPASGPQPPPVTAAPPVP. The span at 912-938 shows a compositional bias: pro residues; it reads PPSPAANPPPPASGPQPPPVTAAPPVP.

It belongs to the UPF0182 family.

It is found in the cell membrane. In Mycobacterium tuberculosis (strain CDC 1551 / Oshkosh), this protein is UPF0182 protein MT3285.